Consider the following 123-residue polypeptide: uncharacterized protein (123 aa).

A run of 3 helical transmembrane segments spans residues 7–29 (VKHLIIAGFSAAILSFLISFDAV), 44–66 (FFIHSFLLIGLPLALFTDAVHRI), and 79–101 (LGLYATVVYVSWDSAVWLAAAMA).

The protein localises to the cell membrane. This is an uncharacterized protein from Bacillus subtilis (strain 168).